Reading from the N-terminus, the 148-residue chain is Large ribosomal subunit protein uL22c (148 aa).

It belongs to the universal ribosomal protein uL22 family. In terms of assembly, part of the 50S ribosomal subunit.

Its subcellular location is the plastid. The protein resides in the chloroplast. Functionally, this protein binds specifically to 23S rRNA. Its function is as follows. The globular domain of the protein is located near the polypeptide exit tunnel on the outside of the subunit, while an extended beta-hairpin is found that lines the wall of the exit tunnel in the center of the 70S ribosome. This chain is Large ribosomal subunit protein uL22c (rpl22), found in Zea mays (Maize).